The following is a 100-amino-acid chain: Large ribosomal subunit protein uL23 (100 aa).

This sequence belongs to the universal ribosomal protein uL23 family. Part of the 50S ribosomal subunit. Contacts protein L29, and trigger factor when it is bound to the ribosome.

In terms of biological role, one of the early assembly proteins it binds 23S rRNA. One of the proteins that surrounds the polypeptide exit tunnel on the outside of the ribosome. Forms the main docking site for trigger factor binding to the ribosome. This chain is Large ribosomal subunit protein uL23, found in Prochlorococcus marinus (strain AS9601).